Consider the following 140-residue polypeptide: Large ribosomal subunit protein uL11 (140 aa).

This sequence belongs to the universal ribosomal protein uL11 family. As to quaternary structure, part of the ribosomal stalk of the 50S ribosomal subunit. Interacts with L10 and the large rRNA to form the base of the stalk. L10 forms an elongated spine to which L12 dimers bind in a sequential fashion forming a multimeric L10(L12)X complex. Post-translationally, one or more lysine residues are methylated.

Functionally, forms part of the ribosomal stalk which helps the ribosome interact with GTP-bound translation factors. In Solidesulfovibrio magneticus (strain ATCC 700980 / DSM 13731 / RS-1) (Desulfovibrio magneticus), this protein is Large ribosomal subunit protein uL11.